The following is a 385-amino-acid chain: Lipid-A-disaccharide synthase (385 aa).

The protein belongs to the LpxB family.

The catalysed reaction is a lipid X + a UDP-2-N,3-O-bis[(3R)-3-hydroxyacyl]-alpha-D-glucosamine = a lipid A disaccharide + UDP + H(+). It functions in the pathway bacterial outer membrane biogenesis; LPS lipid A biosynthesis. In terms of biological role, condensation of UDP-2,3-diacylglucosamine and 2,3-diacylglucosamine-1-phosphate to form lipid A disaccharide, a precursor of lipid A, a phosphorylated glycolipid that anchors the lipopolysaccharide to the outer membrane of the cell. The polypeptide is Lipid-A-disaccharide synthase (Rickettsia canadensis (strain McKiel)).